The following is a 700-amino-acid chain: Peroxisomal acyl-coenzyme A oxidase 3 (700 aa).

At Ala-2 the chain carries N-acetylalanine. The residue at position 281 (Thr-281) is a Phosphothreonine. A Microbody targeting signal motif is present at residues 698-700 (SKL).

Belongs to the acyl-CoA oxidase family. Requires FAD as cofactor.

It localises to the peroxisome. The enzyme catalyses a 2,3-saturated acyl-CoA + O2 = a (2E)-enoyl-CoA + H2O2. It carries out the reaction (2S)-pristanoyl-CoA + O2 = (2E)-pristenoyl-CoA + H2O2. It catalyses the reaction tetracosanoyl-CoA + O2 = (2E)-tetracosenoyl-CoA + H2O2. The catalysed reaction is hexadecanoyl-CoA + O2 = (2E)-hexadecenoyl-CoA + H2O2. The enzyme catalyses hexadecanedioyl-CoA + O2 = (2E)-hexadecenedioyl-CoA + H2O2. It participates in lipid metabolism; peroxisomal fatty acid beta-oxidation. Functionally, oxidizes the CoA-esters of 2-methyl-branched fatty acids. This is Peroxisomal acyl-coenzyme A oxidase 3 (ACOX3) from Homo sapiens (Human).